The sequence spans 274 residues: Penicillin-insensitive murein endopeptidase (274 aa).

An N-terminal signal peptide occupies residues 1 to 19; that stretch reads MKKTAIALLAWFVSSASLA. Intrachain disulfides connect Cys44-Cys265, Cys187-Cys235, and Cys216-Cys223. Positions 110, 113, 120, 147, and 150 each coordinate Zn(2+). The interval 225–274 is disordered; that stretch reads DQPLPPPGDGCGAELQSWFEPPKPGTTKPEKKTPPPLPPSCQALLDEHVL.

The protein belongs to the peptidase M74 family. In terms of assembly, dimer. Zn(2+) serves as cofactor.

The protein resides in the periplasm. Murein endopeptidase that cleaves the D-alanyl-meso-2,6-diamino-pimelyl amide bond that connects peptidoglycan strands. Likely plays a role in the removal of murein from the sacculus. This chain is Penicillin-insensitive murein endopeptidase, found in Salmonella paratyphi A (strain ATCC 9150 / SARB42).